The following is a 446-amino-acid chain: Adenylosuccinate synthetase (446 aa).

Residues 20-26 (GDEGKGK) and 48-50 (GHT) contribute to the GTP site. Residue aspartate 21 is the Proton acceptor of the active site. Residues aspartate 21 and glycine 48 each contribute to the Mg(2+) site. Residues 21-24 (DEGK), 46-49 (NAGH), threonine 137, arginine 151, glutamine 232, threonine 247, and arginine 319 each bind IMP. The active-site Proton donor is the histidine 49. 315 to 321 (SVTGRPR) serves as a coordination point for substrate. Residues arginine 321, 347–349 (KLD), and 429–431 (STG) contribute to the GTP site.

This sequence belongs to the adenylosuccinate synthetase family. As to quaternary structure, homodimer. The cofactor is Mg(2+).

Its subcellular location is the cytoplasm. The enzyme catalyses IMP + L-aspartate + GTP = N(6)-(1,2-dicarboxyethyl)-AMP + GDP + phosphate + 2 H(+). The protein operates within purine metabolism; AMP biosynthesis via de novo pathway; AMP from IMP: step 1/2. In terms of biological role, plays an important role in the de novo pathway of purine nucleotide biosynthesis. Catalyzes the first committed step in the biosynthesis of AMP from IMP. The polypeptide is Adenylosuccinate synthetase (Ralstonia nicotianae (strain ATCC BAA-1114 / GMI1000) (Ralstonia solanacearum)).